The primary structure comprises 199 residues: Small ribosomal subunit protein eS1 (199 aa).

This sequence belongs to the eukaryotic ribosomal protein eS1 family.

The sequence is that of Small ribosomal subunit protein eS1 from Pyrococcus horikoshii (strain ATCC 700860 / DSM 12428 / JCM 9974 / NBRC 100139 / OT-3).